The chain runs to 258 residues: 2-oxo-tetronate isomerase (258 aa).

Catalysis depends on E143, which acts as the Proton donor/acceptor. E143, D178, Q204, and E240 together coordinate Mg(2+). Residue E240 is the Proton donor/acceptor of the active site.

The protein belongs to the hyi family. OtnI subfamily.

The enzyme catalyses 2-dehydro-L-erythronate = 3-dehydro-L-erythronate. It catalyses the reaction 2-dehydro-D-erythronate = 3-dehydro-D-erythronate. Its function is as follows. Catalyzes the isomerization of 2-oxo-tetronate to 3-oxo-tetronate. In Haemophilus influenzae (strain ATCC 51907 / DSM 11121 / KW20 / Rd), this protein is 2-oxo-tetronate isomerase.